A 270-amino-acid chain; its full sequence is Bis(5'-nucleosyl)-tetraphosphatase, symmetrical (270 aa).

The protein belongs to the Ap4A hydrolase family.

It catalyses the reaction P(1),P(4)-bis(5'-adenosyl) tetraphosphate + H2O = 2 ADP + 2 H(+). Hydrolyzes diadenosine 5',5'''-P1,P4-tetraphosphate to yield ADP. The protein is Bis(5'-nucleosyl)-tetraphosphatase, symmetrical of Thioalkalivibrio sulfidiphilus (strain HL-EbGR7).